The primary structure comprises 133 residues: MSFWKTLQRQPRTISLFTNDIASNIKSQKCLQLLKGDVSHRFDVEIANRFPTWDQLQYMRTSCPQGPVSLQRQIPKLDSVLKYKHTDPTFGMDLQKCVQRGLWNPKEALWVDWENKLVGNEPADIDKYIIQRK.

The transit peptide at 1-21 (MSFWKTLQRQPRTISLFTNDI) directs the protein to the mitochondrion. Residue cysteine 97 is part of the active site.

This sequence belongs to the FMP46 family.

It is found in the mitochondrion. In terms of biological role, putative mitochondrial redox protein which could be involved in the reduction of small toxic molecules. The protein is Putative redox protein FMP46, mitochondrial (FMP46) of Saccharomyces cerevisiae (strain ATCC 204508 / S288c) (Baker's yeast).